The following is a 211-amino-acid chain: Regulator of G-protein signaling 2 (211 aa).

2 disordered regions span residues 14–33 and 49–71; these read GPMD…REKM and LQNS…TFIK. Residues 32-66 are necessary for membrane association; it reads KMKRTLLKDWKSRLSYFLQNSSSPGKPKTGKKSKQ. The segment at 79-116 is necessary to inhibit protein synthesis; sequence LWSEAFDELLASKYGLAAFRAFLKSEFCEENIEFWLAC. The region spanning 83–199 is the RGS domain; that stretch reads AFDELLASKY…LESEFYQDLC (117 aa).

Interacts with GNAQ. Does not interact with GNAI1 and GNAI3. Interacts with EIF2B5. Interacts with PRKG1 (isoform alpha). Phosphorylated by protein kinase C. Phosphorylation by PRKG1 leads to activation of RGS2 activity.

It localises to the cell membrane. The protein localises to the cytoplasm. The protein resides in the nucleus. It is found in the nucleolus. Functionally, regulates G protein-coupled receptor signaling cascades. Inhibits signal transduction by increasing the GTPase activity of G protein alpha subunits, thereby driving them into their inactive GDP-bound form. It is involved in the negative regulation of the angiotensin-activated signaling pathway. Plays a role in the regulation of blood pressure in response to signaling via G protein-coupled receptors and GNAQ. Plays a role in regulating the constriction and relaxation of vascular smooth muscle. Binds EIF2B5 and blocks its activity, thereby inhibiting the translation of mRNA into protein. This chain is Regulator of G-protein signaling 2 (RGS2), found in Bos taurus (Bovine).